The chain runs to 330 residues: NADH-quinone oxidoreductase subunit H (330 aa).

8 helical membrane-spanning segments follow: residues 3-23, 76-96, 118-138, 161-181, 188-208, 244-264, 272-292, and 307-327; these read AAFVIATIIKILIVLGLFSAL, PVFMIAPVITAATAFIAMAAI, VGLLFVLGVMAAGLYGPLLAG, EVVTGLSVLAPVMIVGSISLV, AGGMGNWLIWKQPLAFVLFLI, FFIGEYANMFTIGFLVSLIFL, FIPGAIAILIKVFFFFFLFLW, and WLCWKVLMPLAVINVVITGIV.

It belongs to the complex I subunit 1 family. In terms of assembly, NDH-1 is composed of 14 different subunits. Subunits NuoA, H, J, K, L, M, N constitute the membrane sector of the complex.

Its subcellular location is the cell inner membrane. The catalysed reaction is a quinone + NADH + 5 H(+)(in) = a quinol + NAD(+) + 4 H(+)(out). Its function is as follows. NDH-1 shuttles electrons from NADH, via FMN and iron-sulfur (Fe-S) centers, to quinones in the respiratory chain. The immediate electron acceptor for the enzyme in this species is believed to be ubiquinone. Couples the redox reaction to proton translocation (for every two electrons transferred, four hydrogen ions are translocated across the cytoplasmic membrane), and thus conserves the redox energy in a proton gradient. This subunit may bind ubiquinone. In Nitratiruptor sp. (strain SB155-2), this protein is NADH-quinone oxidoreductase subunit H.